A 1196-amino-acid polypeptide reads, in one-letter code: DNA-directed RNA polymerase subunit 2 (1196 aa).

Residues 1074–1095 (SRARGPTQLLTRQAPEGRSRDG) form a disordered region. The C4-type zinc finger occupies 1133–1154 (CDSCGQFAHKVPEKKYYTCTGC).

The protein belongs to the RNA polymerase beta chain family.

It is found in the virion. The catalysed reaction is RNA(n) + a ribonucleoside 5'-triphosphate = RNA(n+1) + diphosphate. Its function is as follows. DNA-dependent RNA polymerase catalyzes the transcription of DNA into RNA using the four ribonucleoside triphosphates as substrates. The polypeptide is DNA-directed RNA polymerase subunit 2 (RPO2) (Acanthamoeba polyphaga mimivirus (APMV)).